A 258-amino-acid polypeptide reads, in one-letter code: Clathrin light chain 3 (258 aa).

Residues 1–18 show a composition bias toward polar residues; the sequence is MSSTLSNEESGLGDSNRS. The interval 1–96 is disordered; sequence MSSTLSNEES…PPPSAMEKEE (96 aa). N-acetylserine is present on S2. Over residues 34 to 50 the composition is skewed to low complexity; sequence SRFQSQRFDSSFSNFDS. Residues 66-79 show a composition bias toward polar residues; it reads RPETQSPPSINSFD. The tract at residues 90-152 is involved in binding clathrin heavy chain; sequence SAMEKEEGFA…TIENNKKLNR (63 aa). Residues 105–164 are a coiled coil; the sequence is RLNALRLEEKEKEEKEMVQQILEAAEQYKAEFYSKRNVTIENNKKLNREKEKFFLENQEK. A compositionally biased stretch (basic residues) spans 224-234; sequence LKHNPPTHMKP. The interval 224-258 is disordered; it reads LKHNPPTHMKPKLPSPSGADPNVSVSEQVTVTEKL. A compositionally biased stretch (polar residues) spans 246-258; it reads VSVSEQVTVTEKL.

This sequence belongs to the clathrin light chain family. In terms of assembly, clathrin coats are formed from molecules containing 3 heavy chains and 3 light chains.

The protein localises to the cytoplasmic vesicle membrane. It is found in the membrane. It localises to the coated pit. Clathrin is the major protein of the polyhedral coat of coated pits and vesicles. This is Clathrin light chain 3 from Arabidopsis thaliana (Mouse-ear cress).